Reading from the N-terminus, the 957-residue chain is Vacuolar membrane protease (957 aa).

Residues 1 to 10 (MARYNPFSFT) are Cytoplasmic-facing. The helical transmembrane segment at 11–31 (PGPVVFFTTVIYVGLFAALLV) threads the bilayer. Topologically, residues 32–369 (THLTVPDYPS…RVFVVFQLHT (338 aa)) are vacuolar. 3 N-linked (GlcNAc...) asparagine glycosylation sites follow: Asn48, Asn105, and Asn136. Positions 152 and 164 each coordinate Zn(2+). Catalysis depends on Glu198, which acts as the Proton acceptor. 3 residues coordinate Zn(2+): Glu199, Glu224, and His297. The chain crosses the membrane as a helical span at residues 370–390 (LFALCVTLLVVAPITLIGLTF). The Cytoplasmic segment spans residues 391-423 (GLSKADKNYLLARKAFVYSSDDDNPVQLYGWRG). Residues 424–444 (FFRFPIIFISATAVVVALAYL) form a helical membrane-spanning segment. At 445–450 (LVRFNA) the chain is on the vacuolar side. Residues 451-471 (FIIYSSPFAVWSMMLSAWFFV) form a helical membrane-spanning segment. Residues 472–490 (AWFFSRGADAMRPSALQRM) are Cytoplasmic-facing. The helical transmembrane segment at 491–511 (YALIWLFIGSFVLLTIVTVFV) threads the bilayer. Residues 512 to 521 (NNYQVVAGYP) are Vacuolar-facing. The helical transmembrane segment at 522-542 (ALFYFAVVFVAIMLSYLELFF) threads the bilayer. Residues 543 to 642 (APTKSAYARH…YPGEQEWSGK (100 aa)) lie on the Cytoplasmic side of the membrane. 2 disordered regions span residues 559-586 (SRRN…PVAD) and 603-627 (FTRY…SQRL). The segment covering 603 to 613 (FTRYGSRRDSA) has biased composition (basic and acidic residues). A helical transmembrane segment spans residues 643-663 (LPSWIWIIQLLLLAPLVIVLV). The Vacuolar segment spans residues 664–685 (GQVALLLTSALYQTPSDGNSPL). The chain crosses the membrane as a helical span at residues 686–706 (FIYLAIAALSVLLLAPTGPFI). The Cytoplasmic portion of the chain corresponds to 707-713 (HRFTYHV). A helical membrane pass occupies residues 714–734 (PTFLFLVCLGTVIYNLVAFPF). At 735-957 (SRDHRLKVYF…LVEGFKRFEI (223 aa)) the chain is on the vacuolar side. Residues Asn782, Asn818, and Asn834 are each glycosylated (N-linked (GlcNAc...) asparagine).

Belongs to the peptidase M28 family. The cofactor is Zn(2+).

The protein localises to the vacuole membrane. Functionally, may be involved in vacuolar sorting and osmoregulation. The polypeptide is Vacuolar membrane protease (Pyrenophora teres f. teres (strain 0-1) (Barley net blotch fungus)).